Here is a 72-residue protein sequence, read N- to C-terminus: Prokaryotic ubiquitin-like protein Pup (72 aa).

Residues 1–11 (MAQRDTGGGQQ) are compositionally biased toward gly residues. The tract at residues 1–41 (MAQRDTGGGQQRTGRRDDETAEAEVEESGASDLKERHEKLS) is disordered. The segment covering 19–29 (ETAEAEVEESG) has biased composition (acidic residues). The stretch at 22 to 61 (EAEVEESGASDLKERHEKLSEDVDSLLDEIDDVLEENAEE) forms a coiled coil. The ARC ATPase binding stretch occupies residues 28–66 (SGASDLKERHEKLSEDVDSLLDEIDDVLEENAEEFVKGY). Basic and acidic residues predominate over residues 32-41 (DLKERHEKLS). Deamidated glutamine is present on Gln72. Gln72 is covalently cross-linked (Isoglutamyl lysine isopeptide (Gln-Lys) (interchain with K-? in acceptor proteins)).

It belongs to the prokaryotic ubiquitin-like protein family. As to quaternary structure, strongly interacts with the proteasome-associated ATPase ARC through a hydrophobic interface; the interacting region of Pup lies in its C-terminal half. There is one Pup binding site per ARC hexamer ring. Is modified by deamidation of its C-terminal glutamine to glutamate by the deamidase Dop, a prerequisite to the subsequent pupylation process.

It functions in the pathway protein degradation; proteasomal Pup-dependent pathway. Protein modifier that is covalently attached to lysine residues of substrate proteins, thereby targeting them for proteasomal degradation. The tagging system is termed pupylation. This Parafrankia sp. (strain EAN1pec) protein is Prokaryotic ubiquitin-like protein Pup.